Here is a 399-residue protein sequence, read N- to C-terminus: Acetate kinase (399 aa).

N10 provides a ligand contact to Mg(2+). Residue K17 coordinates ATP. Position 91 (R91) interacts with substrate. Residue D148 is the Proton donor/acceptor of the active site. ATP is bound by residues 208–212, 283–285, and 331–335; these read HLGNG, DCR, and GIGEN. E385 provides a ligand contact to Mg(2+).

It belongs to the acetokinase family. Homodimer. The cofactor is Mg(2+). Requires Mn(2+) as cofactor.

The protein resides in the cytoplasm. The enzyme catalyses acetate + ATP = acetyl phosphate + ADP. It functions in the pathway metabolic intermediate biosynthesis; acetyl-CoA biosynthesis; acetyl-CoA from acetate: step 1/2. Functionally, catalyzes the formation of acetyl phosphate from acetate and ATP. Can also catalyze the reverse reaction. In Shewanella oneidensis (strain ATCC 700550 / JCM 31522 / CIP 106686 / LMG 19005 / NCIMB 14063 / MR-1), this protein is Acetate kinase.